Here is a 279-residue protein sequence, read N- to C-terminus: Large ribosomal subunit protein uL24m (279 aa).

Residues 1 to 31 constitute a mitochondrion transit peptide; sequence MRDLRKLIPRLRGPGTNVLKMKKPLPLHMRT. Residues 34–51 show a composition bias toward basic and acidic residues; the sequence is REHLNKSDPTVKDDKSAK. The tract at residues 34 to 56 is disordered; that stretch reads REHLNKSDPTVKDDKSAKPELPF. Positions 70–100 constitute a KOW domain; it reads KGDYVYVHQGPLKGKWGRVVETNKYTNGITI. Residues 185–204 are disordered; it reads PRPKTEDKPKDPEGKLDTKN. Residues 187-202 show a composition bias toward basic and acidic residues; it reads PKTEDKPKDPEGKLDT.

It belongs to the universal ribosomal protein uL24 family. Component of the mitochondrial large ribosomal subunit (mt-LSU). Mature yeast 74S mitochondrial ribosomes consist of a small (37S) and a large (54S) subunit. The 37S small subunit contains a 15S ribosomal RNA (15S mt-rRNA) and at least 32 different proteins. The 54S large subunit contains a 21S rRNA (21S mt-rRNA) and at least 45 different proteins. uL24m forms the wall of the exit tunnel.

The protein localises to the mitochondrion. Functionally, component of the mitochondrial ribosome (mitoribosome), a dedicated translation machinery responsible for the synthesis of mitochondrial genome-encoded proteins, including at least some of the essential transmembrane subunits of the mitochondrial respiratory chain. The mitoribosomes are attached to the mitochondrial inner membrane and translation products are cotranslationally integrated into the membrane. The polypeptide is Large ribosomal subunit protein uL24m (mrpl40) (Schizosaccharomyces pombe (strain 972 / ATCC 24843) (Fission yeast)).